Reading from the N-terminus, the 478-residue chain is MASEKDAGKQSAVKLVPLLITVAVGLIIWFIPAPSGLEPKAWHLFAIFVATIIGFISKPLPMGAIAIFALAVTALTGTLSIEDTLSGFGNKTIWLIVIAFFISRGFIKTGLGARISYVFVQKFGKKTLGLSYSLLFSDLILSPAIPSNTARAGGIIFPIIRSLSETFGSSPANGTERKIGAFLLKTGFQGNLITSAMFLTAMAANPLIAKLAHDVAGVDLTWTSWAIAAIVPGLVSLIITPLVIYKLYPPEIKETPDAAKIATEKLKEMGPFKKSELSMVIVFLLVLVLWIFGGSFNIDATTTALIGLAVLLLSQVLTWDDIKKEQGAWDTLTWFAALVMLANFLNELGMVSWFSNAMKSSVSGFSWIVAFIILIVVYYYSHYFFASATAHISAMYSAFLAVVVAAGAPPLLAALSLAFISNLFGSTTHYGSGAAPVFFGAGYIPQGKWWSIGFILSIVHIIVWLVIGGLWWKVLGIW.

A run of 12 helical transmembrane segments spans residues 12–31, 41–57, 64–81, 96–118, 187–209, 222–244, 277–296, 300–319, 332–354, 364–386, 398–420, and 450–472; these read AVKL…IWFI, AWHL…GFIS, AIAI…TLSI, IVIA…ISYV, GFQG…PLIA, WTSW…PLVI, LSMV…GGSF, ATTT…VLTW, LTWF…VSWF, GFSW…YFFA, AFLA…LAFI, and WSIG…GLWW.

It belongs to the SLC13A/DASS transporter (TC 2.A.47) family. DIT1 subfamily.

It localises to the cell membrane. Might be a malate transporter. This is Putative malate transporter YflS (yflS) from Bacillus subtilis (strain 168).